Consider the following 508-residue polypeptide: Protein adenylyltransferase fic-1 (508 aa).

Residues 44-64 form a helical membrane-spanning segment; sequence TVIIISVLVSLICQHFVPYAV. 2 TPR repeats span residues 147–180 and 181–214; these read AILAAKAAGRSRKDGNLERAMTIMEHAMALAPTN and PQILIEMGQIREMHNELVEADQCYVKALAYDPGN. Residues 270–275 carry the Inhibitory (S/T)XXXE(G/N) motif motif; the sequence is TVAIEG. Residue glutamate 274 participates in ATP binding. Residues 326-461 enclose the Fido domain; it reads ISIDDILEMH…LRPFVRYVAK (136 aa). At threonine 352 the chain carries O-AMP-threonine; by autocatalysis. Residue 357-360 participates in ATP binding; sequence VGRF. Residue histidine 404 is part of the active site. ATP contacts are provided by residues 408–415, 440–441, and asparagine 448; these read DGNGRTAR and YY. Threonine 476 is modified (O-AMP-threonine; by autocatalysis). The disordered stretch occupies residues 482-508; it reads LNSGDSKLTPEESEVSEKIEAECRAGN. Basic and acidic residues predominate over residues 496-508; sequence VSEKIEAECRAGN.

It belongs to the fic family. As to quaternary structure, forms homodimers; homodimerization might be required for adenylyltransferase activity. Ubiquitously expressed, with high expression in the germline.

Its subcellular location is the endoplasmic reticulum membrane. The protein localises to the nucleus membrane. The catalysed reaction is L-tyrosyl-[protein] + ATP = O-(5'-adenylyl)-L-tyrosyl-[protein] + diphosphate. It carries out the reaction L-threonyl-[protein] + ATP = 3-O-(5'-adenylyl)-L-threonyl-[protein] + diphosphate. The enzyme catalyses 3-O-(5'-adenylyl)-L-threonyl-[protein] + H2O = L-threonyl-[protein] + AMP + H(+). With respect to regulation, the side chain of Glu-274 determines which of the two opposing activities (AMPylase or de-AMPylase) will take place. In response to endoplasmic reticulum stress, mediates de-AMPylase activity. Adenylyltransferase activity is inhibited by the inhibitory helix present at the N-terminus: Glu-274 binds ATP and competes with ATP-binding at Arg-415, thereby preventing adenylyltransferase activity. In unstressed cells, disengagement of Glu-274 promotes adenylyltransferase activity. Activation dissociates ATP-binding from Glu-274, allowing ordered binding of the entire ATP moiety with the alpha-phosphate in an orientation that is productive for accepting an incoming target hydroxyl side chain. Its function is as follows. Protein that can both mediate the addition of adenosine 5'-monophosphate (AMP) to specific residues of target proteins (AMPylation), and the removal of the same modification from target proteins (de-AMPylation), depending on the context. The side chain of Glu-274 determines which of the two opposing activities (AMPylase or de-AMPylase) will take place. Adenylyltransferase that mediates the addition of adenosine 5'-monophosphate (AMP) to specific residues of target proteins. In vivo target proteins include the heat-shock 70 family proteins hsp-1 and hsp-3 and the translation elongation factors eef-1A, eef-1G and eef-2. Can AMPylate core histone H3 in vitro. Can also act as a phosphodiesterase by mediating removal of ATP (de-AMPylation) from target proteins. Decreases susceptibility to P.aeruginosa-mediated killing and might therefore play a role in the innate immune response. This Caenorhabditis elegans protein is Protein adenylyltransferase fic-1.